We begin with the raw amino-acid sequence, 101 residues long: Protein Tat (101 aa).

The interval 1-24 is interaction with human CREBBP; that stretch reads MEPVDPNREPWNHPGSQPKTACTN. The interval 1–48 is transactivation; sequence MEPVDPNREPWNHPGSQPKTACTNCYCKKCCYHCQVCFLQKGLGISYG. Zn(2+) is bound by residues Cys-22, Cys-25, and Cys-27. The segment at 22-37 is cysteine-rich; that stretch reads CTNCYCKKCCYHCQVC. Residue Lys-28 is modified to N6-acetyllysine; by host PCAF. Zn(2+) is bound by residues Cys-30, His-33, Cys-34, and Cys-37. The core stretch occupies residues 38–48; it reads FLQKGLGISYG. The disordered stretch occupies residues 48-101; that stretch reads GRKKRRQRRSAPPGSKNHQDLIPEQPLFQTQRKPTGPEESKKEVESKAEPDRFD. The Nuclear localization signal, RNA-binding (TAR), and protein transduction motif lies at 49–57; that stretch reads RKKRRQRRS. The segment at 49–86 is interaction with the host capping enzyme RNGTT; it reads RKKRRQRRSAPPGSKNHQDLIPEQPLFQTQRKPTGPEE. 2 positions are modified to N6-acetyllysine; by host EP300 and GCN5L2: Lys-50 and Lys-51. 2 positions are modified to asymmetric dimethylarginine; by host PRMT6: Arg-52 and Arg-53. Positions 82–101 are enriched in basic and acidic residues; sequence TGPEESKKEVESKAEPDRFD.

The protein belongs to the lentiviruses Tat family. In terms of assembly, interacts with host CCNT1. Associates with the P-TEFb complex composed at least of Tat, P-TEFb (CDK9 and CCNT1), TAR RNA, RNA Pol II. Recruits the HATs CREBBP, TAF1/TFIID, EP300, PCAF and GCN5L2. Interacts with host KAT5/Tip60; this interaction targets the latter to degradation. Interacts with the host deacetylase SIRT1. Interacts with host capping enzyme RNGTT; this interaction stimulates RNGTT. Binds to host KDR, and to the host integrins ITGAV/ITGB3 and ITGA5/ITGB1. Interacts with host KPNB1/importin beta-1 without previous binding to KPNA1/importin alpha-1. Interacts with EIF2AK2. Interacts with host nucleosome assembly protein NAP1L1; this interaction may be required for the transport of Tat within the nucleus, since the two proteins interact at the nuclear rim. Interacts with host C1QBP/SF2P32; this interaction involves lysine-acetylated Tat. Interacts with the host chemokine receptors CCR2, CCR3 and CXCR4. Interacts with host DPP4/CD26; this interaction may trigger an anti-proliferative effect. Interacts with host LDLR. Interacts with the host extracellular matrix metalloproteinase MMP1. Interacts with host PRMT6; this interaction mediates Tat's methylation. Interacts with, and is ubiquitinated by MDM2/Hdm2. Interacts with host PSMC3 and HTATIP2. Interacts with STAB1; this interaction may overcome SATB1-mediated repression of IL2 and IL2RA (interleukin) in T cells by binding to the same domain than HDAC1. Interacts (when acetylated) with human CDK13, thereby increasing HIV-1 mRNA splicing and promoting the production of the doubly spliced HIV-1 protein Nef. Interacts with host TBP; this interaction modulates the activity of transcriptional pre-initiation complex. Interacts with host RELA. Interacts with host PLSCR1; this interaction negatively regulates Tat transactivation activity by altering its subcellular distribution. Post-translationally, asymmetrical arginine methylation by host PRMT6 seems to diminish the transactivation capacity of Tat and affects the interaction with host CCNT1. In terms of processing, acetylation by EP300, CREBBP, GCN5L2/GCN5 and PCAF regulates the transactivation activity of Tat. EP300-mediated acetylation of Lys-50 promotes dissociation of Tat from the TAR RNA through the competitive binding to PCAF's bromodomain. In addition, the non-acetylated Tat's N-terminus can also interact with PCAF. PCAF-mediated acetylation of Lys-28 enhances Tat's binding to CCNT1. Lys-50 is deacetylated by SIRT1. Polyubiquitination by host MDM2 does not target Tat to degradation, but activates its transactivation function and fosters interaction with CCNT1 and TAR RNA. Post-translationally, phosphorylated by EIF2AK2 on serine and threonine residues adjacent to the basic region important for TAR RNA binding and function. Phosphorylation of Tat by EIF2AK2 is dependent on the prior activation of EIF2AK2 by dsRNA.

It is found in the host nucleus. The protein localises to the host nucleolus. Its subcellular location is the host cytoplasm. It localises to the secreted. In terms of biological role, transcriptional activator that increases RNA Pol II processivity, thereby increasing the level of full-length viral transcripts. Recognizes a hairpin structure at the 5'-LTR of the nascent viral mRNAs referred to as the transactivation responsive RNA element (TAR) and recruits the cyclin T1-CDK9 complex (P-TEFb complex) that will in turn hyperphosphorylate the RNA polymerase II to allow efficient elongation. The CDK9 component of P-TEFb and other Tat-activated kinases hyperphosphorylate the C-terminus of RNA Pol II that becomes stabilized and much more processive. Other factors such as HTATSF1/Tat-SF1, SUPT5H/SPT5, and HTATIP2 are also important for Tat's function. Besides its effect on RNA Pol II processivity, Tat induces chromatin remodeling of proviral genes by recruiting the histone acetyltransferases (HATs) CREBBP, EP300 and PCAF to the chromatin. This also contributes to the increase in proviral transcription rate, especially when the provirus integrates in transcriptionally silent region of the host genome. To ensure maximal activation of the LTR, Tat mediates nuclear translocation of NF-kappa-B by interacting with host RELA. Through its interaction with host TBP, Tat may also modulate transcription initiation. Tat can reactivate a latently infected cell by penetrating in it and transactivating its LTR promoter. In the cytoplasm, Tat is thought to act as a translational activator of HIV-1 mRNAs. Functionally, extracellular circulating Tat can be endocytosed by surrounding uninfected cells via the binding to several surface receptors such as CD26, CXCR4, heparan sulfate proteoglycans (HSPG) or LDLR. Neurons are rarely infected, but they internalize Tat via their LDLR. Through its interaction with nuclear HATs, Tat is potentially able to control the acetylation-dependent cellular gene expression. Modulates the expression of many cellular genes involved in cell survival, proliferation or in coding for cytokines or cytokine receptors. Tat plays a role in T-cell and neurons apoptosis. Tat induced neurotoxicity and apoptosis probably contribute to neuroAIDS. Circulating Tat also acts as a chemokine-like and/or growth factor-like molecule that binds to specific receptors on the surface of the cells, affecting many cellular pathways. In the vascular system, Tat binds to ITGAV/ITGB3 and ITGA5/ITGB1 integrins dimers at the surface of endothelial cells and competes with bFGF for heparin-binding sites, leading to an excess of soluble bFGF. This Human immunodeficiency virus type 1 group M subtype J (isolate SE9173) (HIV-1) protein is Protein Tat.